A 255-amino-acid chain; its full sequence is Trans-aconitate 2-methyltransferase (255 aa).

Belongs to the methyltransferase superfamily. Tam family.

It localises to the cytoplasm. The enzyme catalyses trans-aconitate + S-adenosyl-L-methionine = (E)-3-(methoxycarbonyl)pent-2-enedioate + S-adenosyl-L-homocysteine. Its function is as follows. Catalyzes the S-adenosylmethionine monomethyl esterification of trans-aconitate. This Mycolicibacterium gilvum (strain PYR-GCK) (Mycobacterium gilvum (strain PYR-GCK)) protein is Trans-aconitate 2-methyltransferase.